The primary structure comprises 343 residues: tRNA N6-adenosine threonylcarbamoyltransferase (343 aa).

Positions 111 and 115 each coordinate Fe cation. Residues 133-137 (AVSGG), Asp-166, Gly-179, Asp-183, and Asn-273 contribute to the substrate site. Asp-301 contributes to the Fe cation binding site.

Belongs to the KAE1 / TsaD family. The cofactor is Fe(2+).

The protein localises to the cytoplasm. The catalysed reaction is L-threonylcarbamoyladenylate + adenosine(37) in tRNA = N(6)-L-threonylcarbamoyladenosine(37) in tRNA + AMP + H(+). Functionally, required for the formation of a threonylcarbamoyl group on adenosine at position 37 (t(6)A37) in tRNAs that read codons beginning with adenine. Is involved in the transfer of the threonylcarbamoyl moiety of threonylcarbamoyl-AMP (TC-AMP) to the N6 group of A37, together with TsaE and TsaB. TsaD likely plays a direct catalytic role in this reaction. This Geotalea uraniireducens (strain Rf4) (Geobacter uraniireducens) protein is tRNA N6-adenosine threonylcarbamoyltransferase.